The following is a 130-amino-acid chain: Cystatin domain-containing protein 1 (130 aa).

Residues Met-1–Lys-23 form the signal peptide. In terms of domain architecture, Cystatin spans Ala-37–Trp-116. Cystine bridges form between Cys-84/Cys-94 and Cys-107/Cys-127.

The protein belongs to the cystatin family.

The protein resides in the secreted. May play a specialized role in spermatogenesis. The chain is Cystatin domain-containing protein 1 from Rattus norvegicus (Rat).